Consider the following 380-residue polypeptide: Cytochrome b (380 aa).

Helical transmembrane passes span 33 to 53 (FGSL…FLAM), 77 to 98 (WLIR…YLHI), 113 to 133 (WNIG…GYVL), and 178 to 198 (FFAF…IHLI). 2 residues coordinate heme b: histidine 83 and histidine 97. The heme b site is built by histidine 182 and histidine 196. Histidine 201 provides a ligand contact to a ubiquinone. The next 4 membrane-spanning stretches (helical) occupy residues 226–246 (YKDL…ALFS), 288–308 (LGGV…PVLH), 320–340 (FSQF…WIGG), and 347–367 (FIII…ILVP).

Belongs to the cytochrome b family. The cytochrome bc1 complex contains 3 respiratory subunits (MT-CYB, CYC1 and UQCRFS1), 2 core proteins (UQCRC1 and UQCRC2) and probably 6 low-molecular weight proteins. Heme b is required as a cofactor.

It localises to the mitochondrion inner membrane. Component of the ubiquinol-cytochrome c reductase complex (complex III or cytochrome b-c1 complex) that is part of the mitochondrial respiratory chain. The b-c1 complex mediates electron transfer from ubiquinol to cytochrome c. Contributes to the generation of a proton gradient across the mitochondrial membrane that is then used for ATP synthesis. This is Cytochrome b (mt-cyb) from Astronotus ocellatus (Oscar).